The following is a 324-amino-acid chain: Probable UDP-sugar transporter protein SLC35A4 (324 aa).

Residues 1–18 (MSVEDGGMPGLARPKQAR) lie on the Cytoplasmic side of the membrane. A helical transmembrane segment spans residues 19 to 39 (WTLMLFLSTAMYGAHAPFLAL). Over 40 to 52 (CHVDGRVPFRPSS) the chain is Lumenal. The helical transmembrane segment at 53 to 73 (AVLLTELTKLLLCAFSLLVGW) threads the bilayer. At 74–85 (QTWPQGTPPWRQ) the chain is on the cytoplasmic side. A helical membrane pass occupies residues 86-106 (AAPFALSALLYGANNNLVIYL). The Lumenal portion of the chain corresponds to 107–142 (QRYMDPSTYQVLSNLKIGSTALLYCLCLGHRLSARQ). The chain crosses the membrane as a helical span at residues 143-163 (GLALLLLMAAGACYASGGFQE). The Cytoplasmic segment spans residues 164-180 (PGNTLPGPRSAAGARPM). The chain crosses the membrane as a helical span at residues 181-201 (PLHITPLGLLLLILYCLISGL). The Lumenal portion of the chain corresponds to 202–214 (SSVYTELIMKRQR). Residues 215-235 (LPLALQNLFLYTFGVILNLGL) form a helical membrane-spanning segment. The Cytoplasmic segment spans residues 236–248 (YAGSGPGPGFLEG). A helical membrane pass occupies residues 249 to 271 (FSGWAVLVVLNQAVNGLLMSAVM). The Lumenal portion of the chain corresponds to 272–279 (KHGSSITR). The chain crosses the membrane as a helical span at residues 280–300 (LFIVSCSLVVNAVLSAVLLQL). Topologically, residues 301-324 (QLTATFFLAALLIGLAVCLYYGSP) are cytoplasmic.

The protein belongs to the nucleotide-sugar transporter family. SLC35A subfamily. As to quaternary structure, found in a complex with SLC35A2 and SLC35A3. Expressed in the kidney, lung, testis, and prostate. Expressed in the brain by sets of neurons, such as the pyramidal cells of the cortex, the Purkinje cells of the cerebellum, and the motoneurons of the brainstem.

The protein localises to the golgi apparatus membrane. It catalyses the reaction CDP-L-ribitol(in) + CDP(out) = CDP-L-ribitol(out) + CDP(in). In terms of biological role, mediates the transport of CDP-ribitol. Does not exhibit CMP-sialic acid, UDP-galactose and UDP-N-acetylglucosamine transport activity. In Rattus norvegicus (Rat), this protein is Probable UDP-sugar transporter protein SLC35A4.